The primary structure comprises 310 residues: uncharacterized protein (310 aa).

Residues 269 to 307 (DLAELERKKSLAEIHKKAAMAKKREEKKKIKQELKKSAK) are a coiled coil. A compositionally biased stretch (basic and acidic residues) spans 290 to 304 (KKREEKKKIKQELKK). The tract at residues 290-310 (KKREEKKKIKQELKKSAKGKK) is disordered.

This is an uncharacterized protein from Magallana gigas (Pacific oyster).